The following is a 460-amino-acid chain: Proton extrusion protein PxcA (460 aa).

Residues 84–194 (RLPDPEQNGS…KTNLDNSNAP (111 aa)) are disordered. Residues 114-136 (NDGKDAENGRQSRDPSILEKLEF) are compositionally biased toward basic and acidic residues. The span at 167–194 (LTSSQPEPSDPSIKTNLAKTNLDNSNAP) shows a compositional bias: polar residues. 4 helical membrane-spanning segments follow: residues 242–262 (FLLLLAILPLLVQIFSKHFLF), 337–357 (GLKNVLADVLSLLVFGWLILI), 373–393 (IYGLSDSAKAFIIILFTDVFV), and 420–440 (FIYGFIATFPVFLDTLFKYWI).

Belongs to the CemA family.

It is found in the cell inner membrane. In terms of biological role, required for H(+) efflux immediately after light irradiation to form a rapid H(+) concentration gradient across the thylakoid membranes. Together with PxcL, contributes to transient H(+) uptake following dark to light transition. This Synechococcus sp. (strain JA-3-3Ab) (Cyanobacteria bacterium Yellowstone A-Prime) protein is Proton extrusion protein PxcA.